The sequence spans 257 residues: MSFFLTTPAAIDLGVNIDHVATLRNARGTAYPDPVRAALAAEDAGADAITLHLREDRRHIVDADVRTLRPRVKTRMNLECAVTPEMLDIACEIRPHDACLVPEKRSELTTEGGLDVVGHFDAVRAACKQLADAGVRVSLFIDPDEAQIRAAHETGAPVIELHTGRYADAHDAAEQQREFERIATGVDAGIALGLKVNAGHGLHYTNVQAIAALPGIAELNIGHAIVAHAVFVGWDNAVREMKAIMVAARVAALHGGR.

N16 provides a ligand contact to 3-amino-2-oxopropyl phosphate. 18–19 (DH) lines the 1-deoxy-D-xylulose 5-phosphate pocket. Residue R27 participates in 3-amino-2-oxopropyl phosphate binding. Catalysis depends on H52, which acts as the Proton acceptor. The 1-deoxy-D-xylulose 5-phosphate site is built by R54 and H59. Catalysis depends on E79, which acts as the Proton acceptor. T109 is a 1-deoxy-D-xylulose 5-phosphate binding site. Residue H200 is the Proton donor of the active site. 3-amino-2-oxopropyl phosphate contacts are provided by residues G201 and 222–223 (GH).

It belongs to the PNP synthase family. Homooctamer; tetramer of dimers.

Its subcellular location is the cytoplasm. The enzyme catalyses 3-amino-2-oxopropyl phosphate + 1-deoxy-D-xylulose 5-phosphate = pyridoxine 5'-phosphate + phosphate + 2 H2O + H(+). It participates in cofactor biosynthesis; pyridoxine 5'-phosphate biosynthesis; pyridoxine 5'-phosphate from D-erythrose 4-phosphate: step 5/5. In terms of biological role, catalyzes the complicated ring closure reaction between the two acyclic compounds 1-deoxy-D-xylulose-5-phosphate (DXP) and 3-amino-2-oxopropyl phosphate (1-amino-acetone-3-phosphate or AAP) to form pyridoxine 5'-phosphate (PNP) and inorganic phosphate. The sequence is that of Pyridoxine 5'-phosphate synthase from Burkholderia pseudomallei (strain 1710b).